Here is a 161-residue protein sequence, read N- to C-terminus: Phosphopantetheine adenylyltransferase (161 aa).

Position 11 (Ser11) interacts with substrate. ATP-binding positions include 11–12 (SF) and His19. Positions 43, 75, and 89 each coordinate substrate. ATP contacts are provided by residues 90 to 92 (GLR), Glu100, and 125 to 131 (YSFISSS).

The protein belongs to the bacterial CoaD family. Homohexamer. It depends on Mg(2+) as a cofactor.

The protein localises to the cytoplasm. The catalysed reaction is (R)-4'-phosphopantetheine + ATP + H(+) = 3'-dephospho-CoA + diphosphate. It functions in the pathway cofactor biosynthesis; coenzyme A biosynthesis; CoA from (R)-pantothenate: step 4/5. Functionally, reversibly transfers an adenylyl group from ATP to 4'-phosphopantetheine, yielding dephospho-CoA (dPCoA) and pyrophosphate. The protein is Phosphopantetheine adenylyltransferase of Staphylococcus carnosus (strain TM300).